Consider the following 29-residue polypeptide: Photosystem I reaction center subunit XII (29 aa).

The chain crosses the membrane as a helical span at residues Phe7–Gly24.

This sequence belongs to the PsaM family.

The protein localises to the cellular thylakoid membrane. The protein is Photosystem I reaction center subunit XII of Synechococcus sp. (strain ATCC 27144 / PCC 6301 / SAUG 1402/1) (Anacystis nidulans).